Consider the following 367-residue polypeptide: tRNA pseudouridine synthase D (367 aa).

Asp78 (nucleophile) is an active-site residue. The 148-residue stretch at 153-300 (GVPNYFGEQR…KQERRRIRLT (148 aa)) folds into the TRUD domain.

Belongs to the pseudouridine synthase TruD family.

It catalyses the reaction uridine(13) in tRNA = pseudouridine(13) in tRNA. In terms of biological role, responsible for synthesis of pseudouridine from uracil-13 in transfer RNAs. The polypeptide is tRNA pseudouridine synthase D (Colwellia psychrerythraea (strain 34H / ATCC BAA-681) (Vibrio psychroerythus)).